We begin with the raw amino-acid sequence, 338 residues long: Holliday junction branch migration complex subunit RuvB (338 aa).

A large ATPase domain (RuvB-L) region spans residues 1–181 (MERAITPEKR…FGVISRLEFY (181 aa)). ATP is bound by residues leucine 20, arginine 21, glycine 62, lysine 65, threonine 66, threonine 67, 128-130 (EDF), arginine 171, tyrosine 181, and arginine 218. A Mg(2+)-binding site is contributed by threonine 66. The tract at residues 182-252 (THDELAFIVT…VVQETLRLLE (71 aa)) is small ATPAse domain (RuvB-S). Residues 255 to 338 (EMGFDQMDRM…TPERPQGSLF (84 aa)) form a head domain (RuvB-H) region. Arginine 310 and arginine 315 together coordinate DNA.

It belongs to the RuvB family. In terms of assembly, homohexamer. Forms an RuvA(8)-RuvB(12)-Holliday junction (HJ) complex. HJ DNA is sandwiched between 2 RuvA tetramers; dsDNA enters through RuvA and exits via RuvB. An RuvB hexamer assembles on each DNA strand where it exits the tetramer. Each RuvB hexamer is contacted by two RuvA subunits (via domain III) on 2 adjacent RuvB subunits; this complex drives branch migration. In the full resolvosome a probable DNA-RuvA(4)-RuvB(12)-RuvC(2) complex forms which resolves the HJ.

It is found in the cytoplasm. The catalysed reaction is ATP + H2O = ADP + phosphate + H(+). Its function is as follows. The RuvA-RuvB-RuvC complex processes Holliday junction (HJ) DNA during genetic recombination and DNA repair, while the RuvA-RuvB complex plays an important role in the rescue of blocked DNA replication forks via replication fork reversal (RFR). RuvA specifically binds to HJ cruciform DNA, conferring on it an open structure. The RuvB hexamer acts as an ATP-dependent pump, pulling dsDNA into and through the RuvAB complex. RuvB forms 2 homohexamers on either side of HJ DNA bound by 1 or 2 RuvA tetramers; 4 subunits per hexamer contact DNA at a time. Coordinated motions by a converter formed by DNA-disengaged RuvB subunits stimulates ATP hydrolysis and nucleotide exchange. Immobilization of the converter enables RuvB to convert the ATP-contained energy into a lever motion, pulling 2 nucleotides of DNA out of the RuvA tetramer per ATP hydrolyzed, thus driving DNA branch migration. The RuvB motors rotate together with the DNA substrate, which together with the progressing nucleotide cycle form the mechanistic basis for DNA recombination by continuous HJ branch migration. Branch migration allows RuvC to scan DNA until it finds its consensus sequence, where it cleaves and resolves cruciform DNA. This is Holliday junction branch migration complex subunit RuvB from Trichlorobacter lovleyi (strain ATCC BAA-1151 / DSM 17278 / SZ) (Geobacter lovleyi).